The chain runs to 112 residues: uncharacterized protein (112 aa).

Asn-29 and Asn-60 each carry an N-linked (GlcNAc...) asparagine; by host glycan. The helical transmembrane segment at 66-86 (IFNGLGFILIVIFIYLLLITL) threads the bilayer.

The protein belongs to the asfivirus B117L family.

It localises to the host membrane. It is found in the virion. This is an uncharacterized protein from Ornithodoros (relapsing fever ticks).